We begin with the raw amino-acid sequence, 530 residues long: Ubiquitin carboxyl-terminal hydrolase 17-like protein 1 (530 aa).

One can recognise a USP domain in the interval 80 to 375; sequence AGLQNMGNTC…QAYVLFYIQK (296 aa). Cys89 serves as the catalytic Nucleophile. His334 (proton acceptor) is an active-site residue. 2 stretches are compositionally biased toward basic and acidic residues: residues 382-392 and 398-411; these read SESVSRGREPR and DTDRRAKQGELKRD. The interval 382 to 411 is disordered; that stretch reads SESVSRGREPRALGAEDTDRRAKQGELKRD.

Belongs to the peptidase C19 family. USP17 subfamily.

It is found in the nucleus. The protein resides in the endoplasmic reticulum. The enzyme catalyses Thiol-dependent hydrolysis of ester, thioester, amide, peptide and isopeptide bonds formed by the C-terminal Gly of ubiquitin (a 76-residue protein attached to proteins as an intracellular targeting signal).. Functionally, deubiquitinating enzyme that removes conjugated ubiquitin from specific proteins to regulate different cellular processes that may include cell proliferation, progression through the cell cycle, apoptosis, cell migration, and the cellular response to viral infection. The polypeptide is Ubiquitin carboxyl-terminal hydrolase 17-like protein 1 (USP17L1) (Homo sapiens (Human)).